The sequence spans 704 residues: Ribosomal RNA large subunit methyltransferase K/L (704 aa).

Residues 43 to 154 (TMYQSLLWSR…KEKASLSLDL (112 aa)) form the THUMP domain.

The protein belongs to the methyltransferase superfamily. RlmKL family.

Its subcellular location is the cytoplasm. It carries out the reaction guanosine(2445) in 23S rRNA + S-adenosyl-L-methionine = N(2)-methylguanosine(2445) in 23S rRNA + S-adenosyl-L-homocysteine + H(+). It catalyses the reaction guanosine(2069) in 23S rRNA + S-adenosyl-L-methionine = N(2)-methylguanosine(2069) in 23S rRNA + S-adenosyl-L-homocysteine + H(+). Functionally, specifically methylates the guanine in position 2445 (m2G2445) and the guanine in position 2069 (m7G2069) of 23S rRNA. The sequence is that of Ribosomal RNA large subunit methyltransferase K/L from Proteus mirabilis (strain HI4320).